Reading from the N-terminus, the 108-residue chain is Cytochrome c6 (108 aa).

A signal peptide spans 1-23 (MRLLFAFFIICHIFTNNVQLTFA). Cys-37, Cys-40, His-41, and Met-81 together coordinate heme c.

It belongs to the cytochrome c family. PetJ subfamily. Monomer. Post-translationally, binds 1 heme c group covalently per subunit.

It localises to the plastid. The protein resides in the chloroplast thylakoid lumen. In terms of biological role, functions as an electron carrier between membrane-bound cytochrome b6-f and photosystem I in oxygenic photosynthesis. This is Cytochrome c6 from Gracilaria tenuistipitata var. liui (Red alga).